A 179-amino-acid polypeptide reads, in one-letter code: Fimbrial subunit ElfA (179 aa).

The first 21 residues, 1–21 (MKKSVLTAFITVVCATSSVMA), serve as a signal peptide directing secretion.

It belongs to the fimbrial protein family.

It localises to the fimbrium. In terms of biological role, part of the elfADCG-ycbUVF fimbrial operon, which promotes adhesion of bacteria to different abiotic surfaces. ElfA is the major fimbrial subunit produced by this operon. The protein is Fimbrial subunit ElfA (elfA) of Escherichia coli (strain K12).